A 505-amino-acid chain; its full sequence is UDP-N-acetylmuramoyl-L-alanyl-D-glutamate--2,6-diaminopimelate ligase (505 aa).

UDP-N-acetyl-alpha-D-muramoyl-L-alanyl-D-glutamate is bound at residue Ser42. Residue 126 to 132 (GTNGKTT) participates in ATP binding. Residues 168-169 (TT), Ser195, Gln201, and Arg203 each bind UDP-N-acetyl-alpha-D-muramoyl-L-alanyl-D-glutamate. Lys235 is subject to N6-carboxylysine. Meso-2,6-diaminopimelate is bound by residues Arg399, 423-426 (DNPR), Gly474, and Glu478. The Meso-diaminopimelate recognition motif motif lies at 423-426 (DNPR).

It belongs to the MurCDEF family. MurE subfamily. Mg(2+) serves as cofactor. In terms of processing, carboxylation is probably crucial for Mg(2+) binding and, consequently, for the gamma-phosphate positioning of ATP.

The protein localises to the cytoplasm. It catalyses the reaction UDP-N-acetyl-alpha-D-muramoyl-L-alanyl-D-glutamate + meso-2,6-diaminopimelate + ATP = UDP-N-acetyl-alpha-D-muramoyl-L-alanyl-gamma-D-glutamyl-meso-2,6-diaminopimelate + ADP + phosphate + H(+). The protein operates within cell wall biogenesis; peptidoglycan biosynthesis. Its function is as follows. Catalyzes the addition of meso-diaminopimelic acid to the nucleotide precursor UDP-N-acetylmuramoyl-L-alanyl-D-glutamate (UMAG) in the biosynthesis of bacterial cell-wall peptidoglycan. This chain is UDP-N-acetylmuramoyl-L-alanyl-D-glutamate--2,6-diaminopimelate ligase, found in Synechocystis sp. (strain ATCC 27184 / PCC 6803 / Kazusa).